Reading from the N-terminus, the 293-residue chain is Large ribosomal subunit protein uL18 (293 aa).

The segment at 249–273 is disordered; sequence DASPAAKKAAKPSKRHTAKRLTYDE. Residues 256-267 show a composition bias toward basic residues; that stretch reads KAAKPSKRHTAK.

The protein belongs to the universal ribosomal protein uL18 family. As to quaternary structure, component of the large ribosomal subunit (LSU).

The protein localises to the cytoplasm. It localises to the nucleus. Functionally, component of the ribosome, a large ribonucleoprotein complex responsible for the synthesis of proteins in the cell. The small ribosomal subunit (SSU) binds messenger RNAs (mRNAs) and translates the encoded message by selecting cognate aminoacyl-transfer RNA (tRNA) molecules. The large subunit (LSU) contains the ribosomal catalytic site termed the peptidyl transferase center (PTC), which catalyzes the formation of peptide bonds, thereby polymerizing the amino acids delivered by tRNAs into a polypeptide chain. The nascent polypeptides leave the ribosome through a tunnel in the LSU and interact with protein factors that function in enzymatic processing, targeting, and the membrane insertion of nascent chains at the exit of the ribosomal tunnel. The sequence is that of Large ribosomal subunit protein uL18 (rpl-5) from Caenorhabditis elegans.